We begin with the raw amino-acid sequence, 286 residues long: Polyamine aminopropyltransferase (286 aa).

One can recognise a PABS domain in the interval 5–238 (PLWHETLHDH…GIMTFAWASD (234 aa)). Q33 contributes to the S-methyl-5'-thioadenosine binding site. Spermidine contacts are provided by H64 and D88. Residues E108 and 140–141 (DG) each bind S-methyl-5'-thioadenosine. Catalysis depends on D158, which acts as the Proton acceptor. 158-161 (DCTD) contacts spermidine. An S-methyl-5'-thioadenosine-binding site is contributed by P165.

It belongs to the spermidine/spermine synthase family. As to quaternary structure, homodimer or homotetramer.

Its subcellular location is the cytoplasm. It carries out the reaction S-adenosyl 3-(methylsulfanyl)propylamine + putrescine = S-methyl-5'-thioadenosine + spermidine + H(+). It participates in amine and polyamine biosynthesis; spermidine biosynthesis; spermidine from putrescine: step 1/1. Functionally, catalyzes the irreversible transfer of a propylamine group from the amino donor S-adenosylmethioninamine (decarboxy-AdoMet) to putrescine (1,4-diaminobutane) to yield spermidine. This Klebsiella pneumoniae subsp. pneumoniae (strain ATCC 700721 / MGH 78578) protein is Polyamine aminopropyltransferase.